A 572-amino-acid polypeptide reads, in one-letter code: Phosphoglucomutase-1 (572 aa).

Substrate-binding positions include Thr-23, Arg-27, 126-127 (SH), and Lys-140. Ser-126 functions as the Phosphoserine intermediate in the catalytic mechanism. Mg(2+) is bound at residue Ser-126. Mg(2+) contacts are provided by Asp-308, Asp-310, and Asp-312. Substrate contacts are provided by residues 312-313 (DR), Thr-373, 392-394 (EES), Lys-405, and Arg-527.

The protein belongs to the phosphohexose mutase family. It depends on Mg(2+) as a cofactor. Post-translationally, phosphorylated via a calcium-dependent protein kinase. Very rapidly (within 80 ms) dephosphorylated during triggered trichocyst exocytosis. O-glycosylated with a short chain of mannose residues.

The protein localises to the cytoplasm. It carries out the reaction alpha-D-glucose 1-phosphate = alpha-D-glucose 6-phosphate. May be involved in membrane fusion in exocytosis. The sequence is that of Phosphoglucomutase-1 (pp63-1) from Paramecium tetraurelia.